A 281-amino-acid chain; its full sequence is Pantothenate synthetase (281 aa).

Residue 30-37 participates in ATP binding; sequence MGYLHEGH. The active-site Proton donor is H37. Q61 lines the (R)-pantoate pocket. Q61 serves as a coordination point for beta-alanine. 147–150 provides a ligand contact to ATP; sequence GEKD. Q153 is a (R)-pantoate binding site. Residues I176 and 184–187 contribute to the ATP site; that span reads KSSR.

It belongs to the pantothenate synthetase family. As to quaternary structure, homodimer.

The protein localises to the cytoplasm. It carries out the reaction (R)-pantoate + beta-alanine + ATP = (R)-pantothenate + AMP + diphosphate + H(+). The protein operates within cofactor biosynthesis; (R)-pantothenate biosynthesis; (R)-pantothenate from (R)-pantoate and beta-alanine: step 1/1. Catalyzes the condensation of pantoate with beta-alanine in an ATP-dependent reaction via a pantoyl-adenylate intermediate. The sequence is that of Pantothenate synthetase from Clostridium botulinum (strain Loch Maree / Type A3).